We begin with the raw amino-acid sequence, 117 residues long: Colipase (117 aa).

A signal peptide spans Met1–Ala22. 5 disulfides stabilise this stretch: Cys39-Cys50, Cys45-Cys61, Cys49-Cys83, Cys71-Cys91, and Cys85-Cys109.

It belongs to the colipase family. As to quaternary structure, forms a 1:1 stoichiometric complex with pancreatic lipase.

It localises to the secreted. In terms of biological role, colipase is a cofactor of pancreatic lipase. It allows the lipase to anchor itself to the lipid-water interface. Without colipase the enzyme is washed off by bile salts, which have an inhibitory effect on the lipase. This chain is Colipase (clps), found in Xenopus tropicalis (Western clawed frog).